The chain runs to 374 residues: Serpin B8 (374 aa).

This sequence belongs to the serpin family. Ov-serpin subfamily.

It localises to the cytoplasm. In terms of biological role, has an important role in epithelial desmosome-mediated cell-cell adhesion. In Homo sapiens (Human), this protein is Serpin B8 (SERPINB8).